We begin with the raw amino-acid sequence, 149 residues long: Large ribosomal subunit protein bL9 (149 aa).

This sequence belongs to the bacterial ribosomal protein bL9 family.

Binds to the 23S rRNA. The polypeptide is Large ribosomal subunit protein bL9 (Bacillus pumilus (strain SAFR-032)).